The chain runs to 566 residues: Oxygen-dependent choline dehydrogenase (566 aa).

Position 7–36 (7–36 (DYIICGAGSAGNVLATRLTEDPNVTVLLLE)) interacts with FAD. Residues 185-204 (EGFGPMDRTVTPKGRRASTA) form a disordered region. H474 functions as the Proton acceptor in the catalytic mechanism.

The protein belongs to the GMC oxidoreductase family. The cofactor is FAD.

It catalyses the reaction choline + A = betaine aldehyde + AH2. The catalysed reaction is betaine aldehyde + NAD(+) + H2O = glycine betaine + NADH + 2 H(+). Its pathway is amine and polyamine biosynthesis; betaine biosynthesis via choline pathway; betaine aldehyde from choline (cytochrome c reductase route): step 1/1. Its function is as follows. Involved in the biosynthesis of the osmoprotectant glycine betaine. Catalyzes the oxidation of choline to betaine aldehyde and betaine aldehyde to glycine betaine at the same rate. The sequence is that of Oxygen-dependent choline dehydrogenase from Burkholderia vietnamiensis (strain G4 / LMG 22486) (Burkholderia cepacia (strain R1808)).